A 364-amino-acid polypeptide reads, in one-letter code: Alanine racemase (364 aa).

The Proton acceptor; specific for D-alanine role is filled by K34. K34 carries the N6-(pyridoxal phosphate)lysine modification. Position 129 (R129) interacts with substrate. The active-site Proton acceptor; specific for L-alanine is the Y259. M307 contacts substrate.

Belongs to the alanine racemase family. Requires pyridoxal 5'-phosphate as cofactor.

The enzyme catalyses L-alanine = D-alanine. It functions in the pathway amino-acid biosynthesis; D-alanine biosynthesis; D-alanine from L-alanine: step 1/1. In terms of biological role, catalyzes the interconversion of L-alanine and D-alanine. May also act on other amino acids. The protein is Alanine racemase (alr) of Coxiella burnetii (strain RSA 331 / Henzerling II).